An 834-amino-acid polypeptide reads, in one-letter code: DNA gyrase subunit A (834 aa).

Positions 53 to 520 constitute a Topo IIA-type catalytic domain; that stretch reads LPDVRDGLKP…NDTEIDEEDL (468 aa). The O-(5'-phospho-DNA)-tyrosine intermediate role is filled by Y141. Positions 547–553 match the GyrA-box motif; that stretch reads QGRGGVG.

It belongs to the type II topoisomerase GyrA/ParC subunit family. Heterotetramer, composed of two GyrA and two GyrB chains. In the heterotetramer, GyrA contains the active site tyrosine that forms a transient covalent intermediate with DNA, while GyrB binds cofactors and catalyzes ATP hydrolysis.

It is found in the cytoplasm. The enzyme catalyses ATP-dependent breakage, passage and rejoining of double-stranded DNA.. A type II topoisomerase that negatively supercoils closed circular double-stranded (ds) DNA in an ATP-dependent manner to modulate DNA topology and maintain chromosomes in an underwound state. Negative supercoiling favors strand separation, and DNA replication, transcription, recombination and repair, all of which involve strand separation. Also able to catalyze the interconversion of other topological isomers of dsDNA rings, including catenanes and knotted rings. Type II topoisomerases break and join 2 DNA strands simultaneously in an ATP-dependent manner. The protein is DNA gyrase subunit A of Brachyspira hyodysenteriae (strain ATCC 49526 / WA1).